Here is a 648-residue protein sequence, read N- to C-terminus: Translation factor GUF1 homolog, mitochondrial (648 aa).

The region spanning E55–P247 is the tr-type G domain. Residues A64–S71, D140–H144, and N194–D197 contribute to the GTP site.

Belongs to the TRAFAC class translation factor GTPase superfamily. Classic translation factor GTPase family. LepA subfamily.

Its subcellular location is the mitochondrion inner membrane. The catalysed reaction is GTP + H2O = GDP + phosphate + H(+). Its function is as follows. Promotes mitochondrial protein synthesis. May act as a fidelity factor of the translation reaction, by catalyzing a one-codon backward translocation of tRNAs on improperly translocated ribosomes. Binds to mitochondrial ribosomes in a GTP-dependent manner. The protein is Translation factor GUF1 homolog, mitochondrial of Oryza sativa subsp. indica (Rice).